The chain runs to 36 residues: Photosystem I reaction center subunit VIII (36 aa).

Residues 7 to 29 (PSILVPLVGIIFPGISMALLFIY) form a helical membrane-spanning segment.

Belongs to the PsaI family.

It is found in the plastid. It localises to the chloroplast thylakoid membrane. Its function is as follows. May help in the organization of the PsaL subunit. The polypeptide is Photosystem I reaction center subunit VIII (Gracilaria tenuistipitata var. liui (Red alga)).